Consider the following 506-residue polypeptide: UDP-N-acetylmuramoyl-L-alanyl-D-glutamate--2,6-diaminopimelate ligase (506 aa).

Residue S38 coordinates UDP-N-acetyl-alpha-D-muramoyl-L-alanyl-D-glutamate. 124–130 contributes to the ATP binding site; sequence GTNGKTS. UDP-N-acetyl-alpha-D-muramoyl-L-alanyl-D-glutamate contacts are provided by residues 166–167, S193, and R201; that span reads TT. Position 233 is an N6-carboxylysine (K233). Residues R401, 425–428, G477, and E481 each bind meso-2,6-diaminopimelate; that span reads DNPR. The Meso-diaminopimelate recognition motif motif lies at 425–428; sequence DNPR.

This sequence belongs to the MurCDEF family. MurE subfamily. It depends on Mg(2+) as a cofactor. In terms of processing, carboxylation is probably crucial for Mg(2+) binding and, consequently, for the gamma-phosphate positioning of ATP.

It is found in the cytoplasm. It carries out the reaction UDP-N-acetyl-alpha-D-muramoyl-L-alanyl-D-glutamate + meso-2,6-diaminopimelate + ATP = UDP-N-acetyl-alpha-D-muramoyl-L-alanyl-gamma-D-glutamyl-meso-2,6-diaminopimelate + ADP + phosphate + H(+). Its pathway is cell wall biogenesis; peptidoglycan biosynthesis. Its function is as follows. Catalyzes the addition of meso-diaminopimelic acid to the nucleotide precursor UDP-N-acetylmuramoyl-L-alanyl-D-glutamate (UMAG) in the biosynthesis of bacterial cell-wall peptidoglycan. The protein is UDP-N-acetylmuramoyl-L-alanyl-D-glutamate--2,6-diaminopimelate ligase of Leptospira interrogans serogroup Icterohaemorrhagiae serovar copenhageni (strain Fiocruz L1-130).